The sequence spans 304 residues: Thiosulfate sulfurtransferase TUM1 (304 aa).

Rhodanese domains lie at 20 to 137 (KVHR…PLDS) and 177 to 299 (LAKK…PEWI). The span at 191 to 201 (RFEGTEPEPRS) shows a compositional bias: basic and acidic residues. Residues 191 to 222 (RFEGTEPEPRSDIPSGHIPGTQPLPYGSLLDP) are disordered. Phosphoserine is present on S201. The active-site Cysteine persulfide intermediate is the C259. Phosphoserine is present on S264.

The protein localises to the mitochondrion. It is found in the cytoplasm. The enzyme catalyses thiosulfate + hydrogen cyanide = thiocyanate + sulfite + 2 H(+). Functionally, sulfur transferase that accepts persulfite from NFS1 and transfers it to UBA4 in the pathway for 2-thiolation of the wobble uridine base of tRNAs. Stimulates sulfur transfer by NFS1. Involved in metabolism of sterol esters in a tRNA thiolation pathway-independent manner. This is Thiosulfate sulfurtransferase TUM1 from Saccharomyces cerevisiae (strain ATCC 204508 / S288c) (Baker's yeast).